Reading from the N-terminus, the 507-residue chain is 2,3-bisphosphoglycerate-independent phosphoglycerate mutase (507 aa).

Residues aspartate 11 and serine 61 each coordinate Mn(2+). Catalysis depends on serine 61, which acts as the Phosphoserine intermediate. Substrate is bound by residues histidine 122, 152-153 (RD), arginine 183, arginine 189, 258-261 (RNDR), and lysine 332. Mn(2+) contacts are provided by aspartate 399, histidine 403, aspartate 440, histidine 441, and histidine 458.

This sequence belongs to the BPG-independent phosphoglycerate mutase family. In terms of assembly, monomer. It depends on Mn(2+) as a cofactor.

The catalysed reaction is (2R)-2-phosphoglycerate = (2R)-3-phosphoglycerate. The protein operates within carbohydrate degradation; glycolysis; pyruvate from D-glyceraldehyde 3-phosphate: step 3/5. Functionally, catalyzes the interconversion of 2-phosphoglycerate and 3-phosphoglycerate. This chain is 2,3-bisphosphoglycerate-independent phosphoglycerate mutase, found in Parabacteroides distasonis (strain ATCC 8503 / DSM 20701 / CIP 104284 / JCM 5825 / NCTC 11152).